The sequence spans 472 residues: 3-isopropylmalate dehydratase large subunit (472 aa).

[4Fe-4S] cluster is bound by residues Cys-353, Cys-414, and Cys-417.

It belongs to the aconitase/IPM isomerase family. LeuC type 1 subfamily. Heterodimer of LeuC and LeuD. [4Fe-4S] cluster serves as cofactor.

It catalyses the reaction (2R,3S)-3-isopropylmalate = (2S)-2-isopropylmalate. Its pathway is amino-acid biosynthesis; L-leucine biosynthesis; L-leucine from 3-methyl-2-oxobutanoate: step 2/4. Functionally, catalyzes the isomerization between 2-isopropylmalate and 3-isopropylmalate, via the formation of 2-isopropylmaleate. The polypeptide is 3-isopropylmalate dehydratase large subunit (Acinetobacter baumannii (strain AB0057)).